The sequence spans 60 residues: Truncated protein A35 homolog (60 aa).

It belongs to the chordopoxvirinae A35 protein family.

This chain is Truncated protein A35 homolog (A38R), found in Variola virus (isolate Human/India/Ind3/1967) (VARV).